Consider the following 151-residue polypeptide: Small ribosomal subunit protein uS15 (151 aa).

The residue at position 32 (Ser-32) is a Phosphoserine. Residues Lys-39 and Lys-43 each participate in a glycyl lysine isopeptide (Lys-Gly) (interchain with G-Cter in ubiquitin) cross-link.

It belongs to the universal ribosomal protein uS15 family. As to quaternary structure, component of the small ribosomal subunit (SSU). Mature yeast ribosomes consist of a small (40S) and a large (60S) subunit. The 40S small subunit contains 1 molecule of ribosomal RNA (18S rRNA) and 33 different proteins (encoded by 57 genes). The large 60S subunit contains 3 rRNA molecules (25S, 5.8S and 5S rRNA) and 46 different proteins (encoded by 81 genes).

The protein resides in the cytoplasm. Component of the ribosome, a large ribonucleoprotein complex responsible for the synthesis of proteins in the cell. The small ribosomal subunit (SSU) binds messenger RNAs (mRNAs) and translates the encoded message by selecting cognate aminoacyl-transfer RNA (tRNA) molecules. The large subunit (LSU) contains the ribosomal catalytic site termed the peptidyl transferase center (PTC), which catalyzes the formation of peptide bonds, thereby polymerizing the amino acids delivered by tRNAs into a polypeptide chain. The nascent polypeptides leave the ribosome through a tunnel in the LSU and interact with protein factors that function in enzymatic processing, targeting, and the membrane insertion of nascent chains at the exit of the ribosomal tunnel. This Saccharomyces cerevisiae (strain ATCC 204508 / S288c) (Baker's yeast) protein is Small ribosomal subunit protein uS15.